Reading from the N-terminus, the 237-residue chain is Uracil-DNA glycosylase (237 aa).

Residue Asp77 is the Proton acceptor of the active site.

This sequence belongs to the uracil-DNA glycosylase (UDG) superfamily. UNG family.

Its subcellular location is the cytoplasm. The enzyme catalyses Hydrolyzes single-stranded DNA or mismatched double-stranded DNA and polynucleotides, releasing free uracil.. Its function is as follows. Excises uracil residues from the DNA which can arise as a result of misincorporation of dUMP residues by DNA polymerase or due to deamination of cytosine. This Acinetobacter baumannii (strain SDF) protein is Uracil-DNA glycosylase.